Consider the following 155-residue polypeptide: UPF0260 protein R01011 (155 aa).

This sequence belongs to the UPF0260 family.

The polypeptide is UPF0260 protein R01011 (Rhizobium meliloti (strain 1021) (Ensifer meliloti)).